Consider the following 231-residue polypeptide: Ion-translocating oxidoreductase complex subunit E (231 aa).

6 helical membrane-spanning segments follow: residues 18–38 (GLVQLLGLCPLLAVTATLTNA), 39–59 (LGLGLATMLVLIGSNILVSLV), 69–89 (IPVFVMIIAALVTSVQLFINA), 93–113 (GLYLSLGIFLPLIVTNCVIIG), 127–147 (STFDGLMMGLGFTLVLCVLGA), and 182–202 (TFLLAMLPPGAFIGMGLLIAL).

This sequence belongs to the NqrDE/RnfAE family. In terms of assembly, the complex is composed of six subunits: RnfA, RnfB, RnfC, RnfD, RnfE and RnfG.

It localises to the cell inner membrane. Its function is as follows. Part of a membrane-bound complex that couples electron transfer with translocation of ions across the membrane. The polypeptide is Ion-translocating oxidoreductase complex subunit E (Shewanella piezotolerans (strain WP3 / JCM 13877)).